The following is a 360-amino-acid chain: Phospho-N-acetylmuramoyl-pentapeptide-transferase (360 aa).

10 consecutive transmembrane segments (helical) span residues 26-46 (AIMS…RLIA), 70-90 (GTPT…ALLW), 94-114 (SNPY…VGFV), 132-152 (WKYF…YMHG), 168-188 (VMPQ…VGTS), 199-219 (GLAI…AWAT), 239-259 (LVVL…FNTY), 263-283 (VFMG…IAVL), 288-308 (LLLV…ILQV), and 338-358 (VIVR…ATLK).

The protein belongs to the glycosyltransferase 4 family. MraY subfamily. Mg(2+) is required as a cofactor.

Its subcellular location is the cell inner membrane. It carries out the reaction UDP-N-acetyl-alpha-D-muramoyl-L-alanyl-gamma-D-glutamyl-meso-2,6-diaminopimeloyl-D-alanyl-D-alanine + di-trans,octa-cis-undecaprenyl phosphate = di-trans,octa-cis-undecaprenyl diphospho-N-acetyl-alpha-D-muramoyl-L-alanyl-D-glutamyl-meso-2,6-diaminopimeloyl-D-alanyl-D-alanine + UMP. It functions in the pathway cell wall biogenesis; peptidoglycan biosynthesis. Its function is as follows. Catalyzes the initial step of the lipid cycle reactions in the biosynthesis of the cell wall peptidoglycan: transfers peptidoglycan precursor phospho-MurNAc-pentapeptide from UDP-MurNAc-pentapeptide onto the lipid carrier undecaprenyl phosphate, yielding undecaprenyl-pyrophosphoryl-MurNAc-pentapeptide, known as lipid I. The protein is Phospho-N-acetylmuramoyl-pentapeptide-transferase of Photobacterium profundum (strain SS9).